A 157-amino-acid chain; its full sequence is Large ribosomal subunit protein eL24 (157 aa).

Residues 95-157 are disordered; the sequence is NQKPEVRKAQ…VSAPRVGGKR (63 aa). Residues 96–117 are compositionally biased toward basic and acidic residues; the sequence is QKPEVRKAQREQAIRAAKEAKK. Low complexity predominate over residues 123–145; it reads KKQTTQSSKAPAKSAQKQKIAKP.

The protein belongs to the eukaryotic ribosomal protein eL24 family. In terms of assembly, component of the large ribosomal subunit.

It localises to the cytoplasm. In terms of biological role, component of the large ribosomal subunit. The ribosome is a large ribonucleoprotein complex responsible for the synthesis of proteins in the cell. Plays an essential role in early embryonic development. The chain is Large ribosomal subunit protein eL24 (rpl24) from Danio rerio (Zebrafish).